A 184-amino-acid chain; its full sequence is Photosystem I assembly protein Ycf4 (184 aa).

Helical transmembrane passes span 22–42 (FCWA…GISS) and 57–77 (IIFF…LFIS).

The protein belongs to the Ycf4 family.

It localises to the plastid. Its subcellular location is the chloroplast thylakoid membrane. Its function is as follows. Seems to be required for the assembly of the photosystem I complex. This chain is Photosystem I assembly protein Ycf4, found in Populus alba (White poplar).